We begin with the raw amino-acid sequence, 2133 residues long: Coagulation factor VIII (2133 aa).

The signal sequence occupies residues M1–S19. Plastocyanin-like domains follow at residues A20–C199, E207–R357, K399–C573, and N583–C730. F5/8 type A domains lie at A20–R357 and K399–C730. Residues C173 and C199 are joined by a disulfide bond. Residues N233 and N259 are each glycosylated (N-linked (GlcNAc...) asparagine). A disulfide bond links C547 and C573. N601 carries N-linked (GlcNAc...) asparagine glycosylation. Residues Y737, Y738, and Y742 each carry the sulfotyrosine modification. Disordered regions lie at residues S760–Q790 and P804–Q914. The segment at S760 to Q1599 is b. The segment covering F761–S780 has biased composition (polar residues). Basic and acidic residues-rich tracts occupy residues L853–E862 and E868–S878. Over residues K879–K888 the composition is skewed to low complexity. The segment covering T889–A900 has biased composition (polar residues). N929, N985, and N1025 each carry an N-linked (GlcNAc...) asparagine glycan. The interval L1042 to R1078 is disordered. The span at S1060–G1075 shows a compositional bias: low complexity. The N-linked (GlcNAc...) asparagine glycan is linked to N1111. Residues P1160–S1179 are disordered. 5 N-linked (GlcNAc...) asparagine glycosylation sites follow: N1181, N1208, N1245, N1265, and N1335. A disordered region spans residues E1200 to R1221. 2 disordered regions span residues L1358 to A1391 and E1406 to P1441. Residues K1378–P1387 are compositionally biased toward basic and acidic residues. N1408 and N1611 each carry an N-linked (GlcNAc...) asparagine glycan. Plastocyanin-like domains lie at R1495–C1659 and G1669–C1822. The F5/8 type A 3 domain maps to R1495–C1822. Intrachain disulfides connect C1633-C1659, C1822-C1970, and C1975-C2127. F5/8 type C domains are found at residues C1822 to C1970 and C1975 to C2127. N1919 is a glycosylation site (N-linked (GlcNAc...) asparagine).

It belongs to the multicopper oxidase family. Interacts with vWF. vWF binding is essential for the stabilization of F8 in circulation. Post-translationally, proteolytically cleaved by cathepsin CTSG to produce a partially activated form.

It localises to the secreted. The protein localises to the extracellular space. Functionally, factor VIII, along with calcium and phospholipid, acts as a cofactor for factor IXa when it converts factor X to the activated form, factor Xa. This chain is Coagulation factor VIII (F8), found in Sus scrofa (Pig).